The following is a 141-amino-acid chain: Large ribosomal subunit protein bL17 (141 aa).

This sequence belongs to the bacterial ribosomal protein bL17 family. In terms of assembly, part of the 50S ribosomal subunit. Contacts protein L32.

The sequence is that of Large ribosomal subunit protein bL17 from Rhizobium meliloti (strain 1021) (Ensifer meliloti).